We begin with the raw amino-acid sequence, 63 residues long: Large ribosomal subunit protein bL32 (63 aa).

The tract at residues 1 to 23 is disordered; sequence MATPKAKVSKSRRDKRRAQFTAR. Positions 7–18 are enriched in basic residues; it reads KVSKSRRDKRRA.

Belongs to the bacterial ribosomal protein bL32 family.

The protein is Large ribosomal subunit protein bL32 of Chlorobium phaeobacteroides (strain BS1).